The chain runs to 215 residues: Probable nicotinate-nucleotide adenylyltransferase (215 aa).

Belongs to the NadD family.

It carries out the reaction nicotinate beta-D-ribonucleotide + ATP + H(+) = deamido-NAD(+) + diphosphate. Its pathway is cofactor biosynthesis; NAD(+) biosynthesis; deamido-NAD(+) from nicotinate D-ribonucleotide: step 1/1. In terms of biological role, catalyzes the reversible adenylation of nicotinate mononucleotide (NaMN) to nicotinic acid adenine dinucleotide (NaAD). The protein is Probable nicotinate-nucleotide adenylyltransferase of Fervidobacterium nodosum (strain ATCC 35602 / DSM 5306 / Rt17-B1).